Here is a 78-residue protein sequence, read N- to C-terminus: Exodeoxyribonuclease 7 small subunit (78 aa).

It belongs to the XseB family. As to quaternary structure, heterooligomer composed of large and small subunits.

Its subcellular location is the cytoplasm. The catalysed reaction is Exonucleolytic cleavage in either 5'- to 3'- or 3'- to 5'-direction to yield nucleoside 5'-phosphates.. Its function is as follows. Bidirectionally degrades single-stranded DNA into large acid-insoluble oligonucleotides, which are then degraded further into small acid-soluble oligonucleotides. This is Exodeoxyribonuclease 7 small subunit from Finegoldia magna (strain ATCC 29328 / DSM 20472 / WAL 2508) (Peptostreptococcus magnus).